We begin with the raw amino-acid sequence, 101 residues long: Glutenin, high molecular weight subunit PC256 (101 aa).

Over residues 1–27 the composition is skewed to polar residues; sequence EKLGQGQQPRQWLQPRQGQQGYYPTSP. Residues 1-65 are disordered; that stretch reads EKLGQGQQPR…QGYDSPYHVS (65 aa). Residues 41 to 62 show a composition bias toward low complexity; the sequence is QGYYPTSPQQSGQGQQGYDSPY.

Belongs to the gliadin/glutenin family. As to quaternary structure, disulfide-bridge linked aggregates.

Glutenins are high-molecular weight seed storage proteins of wheat endosperm. Thought to be responsible for the visco-elastic property of wheat dough. The protein is Glutenin, high molecular weight subunit PC256 of Triticum aestivum (Wheat).